An 85-amino-acid chain; its full sequence is Large ribosomal subunit protein bL27 (85 aa).

The disordered stretch occupies residues 1 to 20; that stretch reads MAHKKAGGSSRNGRDSEAKR.

It belongs to the bacterial ribosomal protein bL27 family.

The polypeptide is Large ribosomal subunit protein bL27 (Aeromonas salmonicida (strain A449)).